A 192-amino-acid chain; its full sequence is U1 small nuclear ribonucleoprotein C (192 aa).

Residues 4–36 (YYCEYCDIYLTHSSPVGRRQHNQGRKHISAKIE) form a Matrin-type zinc finger. Residues 118–192 (PGANKYPNNN…FVNKNSEQPN (75 aa)) form a disordered region. Residues 133 to 154 (RISNTPKPYNNYTNKPITNSPY) are compositionally biased toward polar residues. Residues 164 to 173 (NNENSNNFSN) show a composition bias toward low complexity. Positions 174–192 (YQMNKDNSNFVNKNSEQPN) are enriched in polar residues.

This sequence belongs to the U1 small nuclear ribonucleoprotein C family. In terms of assembly, U1 snRNP is composed of the 7 core Sm proteins B/B', D1, D2, D3, E, F and G that assemble in a heptameric protein ring on the Sm site of the small nuclear RNA to form the core snRNP, and at least 3 U1 snRNP-specific proteins U1-70K, U1-A and U1-C. U1-C interacts with U1 snRNA and the 5' splice-site region of the pre-mRNA.

It localises to the nucleus. Its function is as follows. Component of the spliceosomal U1 snRNP, which is essential for recognition of the pre-mRNA 5' splice-site and the subsequent assembly of the spliceosome. U1-C is directly involved in initial 5' splice-site recognition for both constitutive and regulated alternative splicing. The interaction with the 5' splice-site seems to precede base-pairing between the pre-mRNA and the U1 snRNA. Stimulates commitment or early (E) complex formation by stabilizing the base pairing of the 5' end of the U1 snRNA and the 5' splice-site region. This Plasmodium chabaudi chabaudi protein is U1 small nuclear ribonucleoprotein C.